A 429-amino-acid polypeptide reads, in one-letter code: Glutamyl-tRNA reductase (429 aa).

Substrate-binding positions include threonine 56–arginine 59, serine 119, glutamate 124–glutamine 126, and glutamine 130. Cysteine 57 serves as the catalytic Nucleophile. Glycine 199 to isoleucine 204 contacts NADP(+).

It belongs to the glutamyl-tRNA reductase family. In terms of assembly, homodimer.

It carries out the reaction (S)-4-amino-5-oxopentanoate + tRNA(Glu) + NADP(+) = L-glutamyl-tRNA(Glu) + NADPH + H(+). Its pathway is porphyrin-containing compound metabolism; protoporphyrin-IX biosynthesis; 5-aminolevulinate from L-glutamyl-tRNA(Glu): step 1/2. Catalyzes the NADPH-dependent reduction of glutamyl-tRNA(Glu) to glutamate 1-semialdehyde (GSA). The polypeptide is Glutamyl-tRNA reductase (Herminiimonas arsenicoxydans).